We begin with the raw amino-acid sequence, 204 residues long: Protein FAM167A (204 aa).

Positions 58–80 (GLAVSDGSTELEKDAGLKPRATP) are disordered. Residues 113-146 (LRKELMEMRIQDQQLARQLMRLRGDINKLKVEQT) adopt a coiled-coil conformation.

Belongs to the FAM167 (SEC) family.

The polypeptide is Protein FAM167A (fam167a) (Danio rerio (Zebrafish)).